The sequence spans 490 residues: Histone-lysine N-methyltransferase Smyd1 (490 aa).

Residues 7–253 (ENVEVFTSEG…EGEELTVSYI (247 aa)) form the SET domain. 17–19 (KGR) lines the S-adenosyl-L-methionine pocket. Residues Cys52, Cys55, Cys65, Cys68, Cys74, Cys78, His86, and Cys90 each contribute to the Zn(2+) site. The MYND-type zinc finger occupies 52–90 (CHTCFKRQEKLHRCGQCKFAHYCDRTCQKDAWLNHKNEC). S-adenosyl-L-methionine is bound by residues His135 and 205–206 (NH). Residue Cys208 coordinates Zn(2+). 270–272 (YYF) provides a ligand contact to S-adenosyl-L-methionine. Residues Cys274, Cys276, and Cys279 each contribute to the Zn(2+) site.

The protein belongs to the class V-like SAM-binding methyltransferase superfamily. In terms of assembly, interacts with HDAC1, HDAC2 and HDAC3. Interacts (via MYND-type zinc finger) with NACA isoform skNAC. Expressed in cardiac and skeletal muscle, lymphocytes and thymus.

It localises to the cytoplasm. Its subcellular location is the nucleus. It catalyses the reaction L-lysyl(4)-[histone H3] + 3 S-adenosyl-L-methionine = N(6),N(6),N(6)-trimethyl-L-lysyl(4)-[histone H3] + 3 S-adenosyl-L-homocysteine + 3 H(+). Functionally, methylates histone H3 at 'Lys-4' (H3K4me). Acts as a transcriptional repressor. Essential for cardiomyocyte differentiation and cardiac morphogenesis. This Mus musculus (Mouse) protein is Histone-lysine N-methyltransferase Smyd1 (Smyd1).